Consider the following 276-residue polypeptide: uncharacterized protein (276 aa).

The first 16 residues, 1 to 16 (MELGLILMFASAFVSA), serve as a signal peptide directing secretion. N-linked (GlcNAc...) asparagine glycosylation occurs at Asn265.

This is an uncharacterized protein from Encephalitozoon cuniculi (strain GB-M1) (Microsporidian parasite).